Reading from the N-terminus, the 308-residue chain is Glutathione synthetase (308 aa).

Residues 117-300 (KLLPLSFPKF…LERDCWDYFE (184 aa)) form the ATP-grasp domain. ATP is bound at residue 143–198 (YAEYGDIVLKPLYDYGGNGVCRICGRADVGAISSAMVERYEAPLVAQQFIDDISSD). Mg(2+)-binding residues include Glu271 and Asn273.

The protein belongs to the prokaryotic GSH synthase family. The cofactor is Mg(2+). Mn(2+) is required as a cofactor.

The enzyme catalyses gamma-L-glutamyl-L-cysteine + glycine + ATP = glutathione + ADP + phosphate + H(+). It functions in the pathway sulfur metabolism; glutathione biosynthesis; glutathione from L-cysteine and L-glutamate: step 2/2. In Anaplasma centrale, this protein is Glutathione synthetase.